Consider the following 194-residue polypeptide: MYKNGFFKNYLSLFLIFLVIACTSKDSSNEYVEEQEAENSSKPDDSKIDEHTIGHVFHAMGVVHSKKDRKSLGKNIKVFYFSEEDGHFQTIPSKENAKLIVYFYDNVYAGEAPISISGKEAFIFVGITPDFKKIINSNLHGAKSDLIGTFKDLNIKNSKLEITVDENNSDAKTFLESVNYIIDGVEKISPMLTN.

The first 21 residues, Met-1–Ala-21, serve as a signal peptide directing secretion. Cys-22 carries N-palmitoyl cysteine lipidation. A lipid anchor (S-diacylglycerol cysteine) is attached at Cys-22.

Its subcellular location is the cell outer membrane. This Borreliella burgdorferi (strain ZS7) (Borrelia burgdorferi) protein is Outer surface 22 kDa lipoprotein (p22).